Here is a 244-residue protein sequence, read N- to C-terminus: MKRYLTIIYGAASYLVFLVAFGYAIGFVGDVVVPRTVDHAIAAPIGQAVVVNLVLLGVFAVQHSVMARQGFKRWWTRFVPPSIERSTYVLLASVALLLLYWQWRTMPAVIWDVRQPAGRVALWALFWLGWATVLTSTFMINHFELFGLRQVYLAWRGKPYTEIGFQAHLLYRWVRHPIMLGFVVAFWATPMMTAGHLLFAIGATGYILVALQFEERDLLAALGDQYRDYRREVSMLLPWPHRHT.

5 helical membrane-spanning segments follow: residues isoleucine 7 to phenylalanine 27, isoleucine 41 to valine 61, leucine 90 to isoleucine 110, valine 120 to isoleucine 140, and glycine 181 to isoleucine 201.

It belongs to the nurim family.

The protein localises to the membrane. The catalysed reaction is methanethiol + S-adenosyl-L-methionine = dimethyl sulfide + S-adenosyl-L-homocysteine + H(+). In terms of biological role, catalyzes the methylation of methanethiol (MeSH) to yield dimethylsulphide (DMS). This Mycobacterium tuberculosis (strain ATCC 25618 / H37Rv) protein is Methanethiol S-methyltransferase.